A 133-amino-acid chain; its full sequence is Small ribosomal subunit protein uS8 (133 aa).

Belongs to the universal ribosomal protein uS8 family. As to quaternary structure, part of the 30S ribosomal subunit. Contacts proteins S5 and S12.

Its function is as follows. One of the primary rRNA binding proteins, it binds directly to 16S rRNA central domain where it helps coordinate assembly of the platform of the 30S subunit. This is Small ribosomal subunit protein uS8 from Prochlorococcus marinus (strain AS9601).